The sequence spans 574 residues: DNA polymerase I (574 aa).

The 158-residue stretch at 4–161 folds into the 3'-5' exonuclease domain; it reads EYVTGEEGLK…ELFPKMRDML (158 aa).

Belongs to the DNA polymerase type-A family.

The catalysed reaction is DNA(n) + a 2'-deoxyribonucleoside 5'-triphosphate = DNA(n+1) + diphosphate. The chain is DNA polymerase I (polA) from Aquifex aeolicus (strain VF5).